The chain runs to 1231 residues: ATP-dependent RNA helicase DHX30 (1231 aa).

Residues P39–A65 are disordered. DRBM domains follow at residues P80–F148 and P292–L359. Residues L488 to P656 enclose the Helicase ATP-binding domain. An ATP-binding site is contributed by G501–T508. The DEAH box motif lies at D603–H606. The region spanning L697–M870 is the Helicase C-terminal domain.

It belongs to the DEAD box helicase family. DEAH subfamily.

It is found in the cytoplasm. The protein localises to the mitochondrion. The protein resides in the mitochondrion matrix. It localises to the mitochondrion nucleoid. It carries out the reaction ATP + H2O = ADP + phosphate + H(+). RNA-dependent helicase. Plays an important role in the assembly of the mitochondrial large ribosomal subunit. Required for optimal function of the zinc-finger antiviral protein ZC3HAV1. Associates with mitochondrial DNA. Involved in nervous system development and differentiation through its involvement in the up-regulation of a number of genes which are required for neurogenesis, including GSC, NCAM1, neurogenin, and NEUROD. The polypeptide is ATP-dependent RNA helicase DHX30 (DHX30) (Gallus gallus (Chicken)).